The sequence spans 215 residues: Dual specificity phosphatase 29 (215 aa).

The region spanning 53–201 is the Tyrosine-protein phosphatase domain; the sequence is HVNEVWPRLH…LRELDKQLVK (149 aa). 145 to 152 is a binding site for substrate; it reads HCAMGRSR. Cys146 (phosphocysteine intermediate) is an active-site residue.

This sequence belongs to the protein-tyrosine phosphatase family. Non-receptor class dual specificity subfamily. As to quaternary structure, homodimer. Interacts with PRKAA2.

The protein localises to the cytoplasm. It localises to the nucleus. The catalysed reaction is O-phospho-L-tyrosyl-[protein] + H2O = L-tyrosyl-[protein] + phosphate. It catalyses the reaction O-phospho-L-seryl-[protein] + H2O = L-seryl-[protein] + phosphate. It carries out the reaction O-phospho-L-threonyl-[protein] + H2O = L-threonyl-[protein] + phosphate. In terms of biological role, dual specificity phosphatase able to dephosphorylate phosphotyrosine, phosphoserine and phosphothreonine residues within the same substrate, with a preference for phosphotyrosine as a substrate. Involved in the modulation of intracellular signaling cascades. In skeletal muscle regulates systemic glucose homeostasis by activating, AMPK, an energy sensor protein kinase. Affects MAP kinase signaling though modulation of the MAPK1/2 cascade in skeletal muscle promoting muscle cell differentiation, development and atrophy. This Rattus norvegicus (Rat) protein is Dual specificity phosphatase 29 (Dusp29).